A 219-amino-acid polypeptide reads, in one-letter code: Protoglabretal synthase ISM2 (219 aa).

The next 5 helical transmembrane spans lie at 26–46 (VHAWNGAATFLVMYGIWVLAG), 59–79 (LMIWWAVSGLIHIIHEGYWLF), 112–132 (AVVGIEGIAVIIVGPASLFAV), 144–164 (ILQLALALVQFYGSTLYFITA), and 178–198 (YYKYFIAQGGTWLLFPALIII). The EXPERA domain occupies 55–197 (TDKWLMIWWA…TWLLFPALII (143 aa)).

Belongs to the EBP family.

The protein localises to the membrane. The catalysed reaction is 7,8-epoxymelianol = protoglabretal. It participates in secondary metabolite biosynthesis; terpenoid biosynthesis. Its function is as follows. Isomerase involved in the biosynthesis of glabretanes triterpene natural products such as glabretal, a component with in vitro antiproliferative properties on lymphocytes. Catalyzes the conversion of 7,8-epoxymelianol to protoglabretal via skeletal rearrangements. The chain is Protoglabretal synthase ISM2 from Ailanthus altissima (Tree-of-heaven).